Here is a 463-residue protein sequence, read N- to C-terminus: Bifunctional protein HldE (463 aa).

The segment at 1–311 (MKQILVVGDL…EEIALILNQT (311 aa)) is ribokinase. An ATP-binding site is contributed by 191–194 (NRIE). Asp260 is a catalytic residue. Residues 334 to 463 (FTNGCFDILH…IERIKRTCND (130 aa)) form a cytidylyltransferase region.

In the N-terminal section; belongs to the carbohydrate kinase PfkB family. It in the C-terminal section; belongs to the cytidylyltransferase family. As to quaternary structure, homodimer.

The catalysed reaction is D-glycero-beta-D-manno-heptose 7-phosphate + ATP = D-glycero-beta-D-manno-heptose 1,7-bisphosphate + ADP + H(+). It carries out the reaction D-glycero-beta-D-manno-heptose 1-phosphate + ATP + H(+) = ADP-D-glycero-beta-D-manno-heptose + diphosphate. It participates in nucleotide-sugar biosynthesis; ADP-L-glycero-beta-D-manno-heptose biosynthesis; ADP-L-glycero-beta-D-manno-heptose from D-glycero-beta-D-manno-heptose 7-phosphate: step 1/4. It functions in the pathway nucleotide-sugar biosynthesis; ADP-L-glycero-beta-D-manno-heptose biosynthesis; ADP-L-glycero-beta-D-manno-heptose from D-glycero-beta-D-manno-heptose 7-phosphate: step 3/4. In terms of biological role, catalyzes the phosphorylation of D-glycero-D-manno-heptose 7-phosphate at the C-1 position to selectively form D-glycero-beta-D-manno-heptose-1,7-bisphosphate. Functionally, catalyzes the ADP transfer from ATP to D-glycero-beta-D-manno-heptose 1-phosphate, yielding ADP-D-glycero-beta-D-manno-heptose. The chain is Bifunctional protein HldE from Helicobacter pylori (strain Shi470).